Reading from the N-terminus, the 189-residue chain is Riboflavin transporter RibU (189 aa).

Residues 1–9 (MNGRRKLNM) lie on the Cytoplasmic side of the membrane. Residues 10 to 29 (QQNKRLITISMLSAIAFVLT) traverse the membrane as a helical segment. Residues 30 to 44 (FIKFPIPFLPPYLTL) lie on the Periplasmic side of the membrane. An intramembrane region (helical) is located at residues 45–56 (DFSDVPSLLATF). At 57–58 (TF) the chain is on the cytoplasmic side. A helical membrane pass occupies residues 59-78 (GPVAGIIVALVKNLLNYLFS). Topologically, residues 79 to 82 (MGDP) are periplasmic. A helical membrane pass occupies residues 83 to 104 (VGPFANFLAGASFLLTAYAIYK). The Cytoplasmic portion of the chain corresponds to 105–107 (NKR). The helical transmembrane segment at 108–132 (STKSLITGLIIATIVMTIVLSILNY) threads the bilayer. Over 133–159 (FVLLPLYGMIFNLADIANNLKVIIVSG) the chain is Periplasmic. Residues 160-182 (IIPFNIIKGIVISIVFILLYRRL) form a helical membrane-spanning segment. Residues 183–189 (ANFLKRI) lie on the Cytoplasmic side of the membrane.

This sequence belongs to the prokaryotic riboflavin transporter (P-RFT) (TC 2.A.87) family. As to quaternary structure, forms a stable energy-coupling factor (ECF) transporter complex composed of a membrane-embedded substrate-binding protein (S component), 2 ATP-binding proteins (A component) and 2 transmembrane proteins (T component). May be able to interact with more than 1 S component at a time.

Its subcellular location is the cell membrane. Functionally, mediates riboflavin uptake, may also transport FMN and roseoflavin. Probably a riboflavin-binding protein that interacts with the energy-coupling factor (ECF) ABC-transporter complex. Unlike classic ABC transporters this ECF transporter provides the energy necessary to transport a number of different substrates. The substrates themselves are bound by transmembrane, not extracytoplasmic soluble proteins. This chain is Riboflavin transporter RibU (ribU), found in Staphylococcus aureus (strain TCH60).